Here is a 330-residue protein sequence, read N- to C-terminus: LIM domain-containing protein pin-2 (330 aa).

LIM zinc-binding domains are found at residues Cys21–Asp73, Cys82–Cys132, Cys144–Cys194, Cys202–Asp255, and Cys264–Cys315.

In terms of tissue distribution, expressed in neurons and intestine.

Its subcellular location is the cytoplasm. It localises to the nucleus. In Caenorhabditis elegans, this protein is LIM domain-containing protein pin-2 (pin-2).